Here is a 481-residue protein sequence, read N- to C-terminus: Aspartyl/glutamyl-tRNA(Asn/Gln) amidotransferase subunit B (481 aa).

Belongs to the GatB/GatE family. GatB subfamily. As to quaternary structure, heterotrimer of A, B and C subunits.

The enzyme catalyses L-glutamyl-tRNA(Gln) + L-glutamine + ATP + H2O = L-glutaminyl-tRNA(Gln) + L-glutamate + ADP + phosphate + H(+). The catalysed reaction is L-aspartyl-tRNA(Asn) + L-glutamine + ATP + H2O = L-asparaginyl-tRNA(Asn) + L-glutamate + ADP + phosphate + 2 H(+). In terms of biological role, allows the formation of correctly charged Asn-tRNA(Asn) or Gln-tRNA(Gln) through the transamidation of misacylated Asp-tRNA(Asn) or Glu-tRNA(Gln) in organisms which lack either or both of asparaginyl-tRNA or glutaminyl-tRNA synthetases. The reaction takes place in the presence of glutamine and ATP through an activated phospho-Asp-tRNA(Asn) or phospho-Glu-tRNA(Gln). This is Aspartyl/glutamyl-tRNA(Asn/Gln) amidotransferase subunit B from Pseudomonas paraeruginosa (strain DSM 24068 / PA7) (Pseudomonas aeruginosa (strain PA7)).